The following is a 228-amino-acid chain: U1 small nuclear ribonucleoprotein C (228 aa).

Residues 4-36 form a Matrin-type zinc finger; the sequence is YYCEYCDIYLTHSSPVGRRQHVQGRKHISAKIE. Residues 179 to 190 are compositionally biased toward basic and acidic residues; sequence LVKDNPNEERNG. A disordered region spans residues 179–228; it reads LVKDNPNEERNGDSAIANQPSTMHHEEDQDDPANATGGTANNNDNVSINA. The segment covering 211–221 has biased composition (low complexity); sequence ANATGGTANNN.

It belongs to the U1 small nuclear ribonucleoprotein C family. As to quaternary structure, U1 snRNP is composed of the 7 core Sm proteins B/B', D1, D2, D3, E, F and G that assemble in a heptameric protein ring on the Sm site of the small nuclear RNA to form the core snRNP, and at least 3 U1 snRNP-specific proteins U1-70K, U1-A and U1-C. U1-C interacts with U1 snRNA and the 5' splice-site region of the pre-mRNA.

The protein localises to the nucleus. In terms of biological role, component of the spliceosomal U1 snRNP, which is essential for recognition of the pre-mRNA 5' splice-site and the subsequent assembly of the spliceosome. U1-C is directly involved in initial 5' splice-site recognition for both constitutive and regulated alternative splicing. The interaction with the 5' splice-site seems to precede base-pairing between the pre-mRNA and the U1 snRNA. Stimulates commitment or early (E) complex formation by stabilizing the base pairing of the 5' end of the U1 snRNA and the 5' splice-site region. The polypeptide is U1 small nuclear ribonucleoprotein C (Plasmodium knowlesi (strain H)).